The following is a 222-amino-acid chain: PKHD-type hydroxylase Syncc9902_2001 (222 aa).

The Fe2OG dioxygenase domain occupies Arg80–Ser174. The Fe cation site is built by His98, Asp100, and His155. Arg165 lines the 2-oxoglutarate pocket.

The cofactor is Fe(2+). L-ascorbate is required as a cofactor.

This chain is PKHD-type hydroxylase Syncc9902_2001, found in Synechococcus sp. (strain CC9902).